The chain runs to 209 residues: Uracil phosphoribosyltransferase (209 aa).

5-phospho-alpha-D-ribose 1-diphosphate-binding positions include arginine 79, arginine 104, and 131-139 (DPMLATGGS). Residues isoleucine 194 and 199 to 201 (GDA) each bind uracil. Residue aspartate 200 participates in 5-phospho-alpha-D-ribose 1-diphosphate binding.

This sequence belongs to the UPRTase family. It depends on Mg(2+) as a cofactor.

The enzyme catalyses UMP + diphosphate = 5-phospho-alpha-D-ribose 1-diphosphate + uracil. The protein operates within pyrimidine metabolism; UMP biosynthesis via salvage pathway; UMP from uracil: step 1/1. Allosterically activated by GTP. Catalyzes the conversion of uracil and 5-phospho-alpha-D-ribose 1-diphosphate (PRPP) to UMP and diphosphate. The sequence is that of Uracil phosphoribosyltransferase from Clostridium acetobutylicum (strain ATCC 824 / DSM 792 / JCM 1419 / IAM 19013 / LMG 5710 / NBRC 13948 / NRRL B-527 / VKM B-1787 / 2291 / W).